The following is a 216-amino-acid chain: Protein Syd (216 aa).

This sequence belongs to the Syd family.

It localises to the cell inner membrane. Functionally, interacts with the SecY protein in vivo. May bind preferentially to an uncomplexed state of SecY, thus functioning either as a chelating agent for excess SecY in the cell or as a regulatory factor that negatively controls the translocase function. This is Protein Syd from Shewanella sp. (strain W3-18-1).